Reading from the N-terminus, the 102-residue chain is Integration host factor subunit alpha (102 aa).

Residues F49 to I71 are disordered.

This sequence belongs to the bacterial histone-like protein family. Heterodimer of an alpha and a beta chain.

This protein is one of the two subunits of integration host factor, a specific DNA-binding protein that functions in genetic recombination as well as in transcriptional and translational control. The protein is Integration host factor subunit alpha of Nitrosomonas eutropha (strain DSM 101675 / C91 / Nm57).